A 453-amino-acid polypeptide reads, in one-letter code: MSEKEIWEKVLEIAQEKLSAVSYSTFLKDTELYTIKDGEAIVLSSIPFNANWLNQQYAEIIQAILFDVVGYEVKPHFITTEELANYSNNETATPKETTKPSTETTEDNHVLGREQFNAHNTFDTFVIGPGNRFPHAASLAVAEAPAKAYNPLFIYGGVGLGKTHLMHAIGHHVLDNNPDAKVIYTSSEKFTNEFIKSIRDNEGEAFRERYRNIDVLLIDDIQFIQNKVQTQEEFFYTFNELHQNNKQIVISSDRPPKEIAQLEDRLRSRFEWGLIVDITPPDYETRMAILQKKIEEEKLDIPPEALNYIANQIQSNIRELEGALTRLLAYSQLLGKPITTELTAEALKDIIQAPKSKKITIQDIQKIVGQYYNVRIEDFSAKKRTKSIAYPRQIAMYLSRELTDFSLPKIGEEFGGRDHTTVIHAHEKISKDLKEDPIFKQEVENLEKEIRNV.

Residues 1 to 71 form a domain I, interacts with DnaA modulators region; that stretch reads MSEKEIWEKV…QAILFDVVGY (71 aa). A domain II region spans residues 71-114; sequence YEVKPHFITTEELANYSNNETATPKETTKPSTETTEDNHVLGRE. Residues 115–331 form a domain III, AAA+ region region; the sequence is QFNAHNTFDT…GALTRLLAYS (217 aa). Gly-159, Gly-161, Lys-162, and Thr-163 together coordinate ATP. Residues 332-453 form a domain IV, binds dsDNA region; the sequence is QLLGKPITTE…ENLEKEIRNV (122 aa).

The protein belongs to the DnaA family. Oligomerizes as a right-handed, spiral filament on DNA at oriC.

It is found in the cytoplasm. In terms of biological role, plays an essential role in the initiation and regulation of chromosomal replication. ATP-DnaA binds to the origin of replication (oriC) to initiate formation of the DNA replication initiation complex once per cell cycle. Binds the DnaA box (a 9 base pair repeat at the origin) and separates the double-stranded (ds)DNA. Forms a right-handed helical filament on oriC DNA; dsDNA binds to the exterior of the filament while single-stranded (ss)DNA is stabiized in the filament's interior. The ATP-DnaA-oriC complex binds and stabilizes one strand of the AT-rich DNA unwinding element (DUE), permitting loading of DNA polymerase. After initiation quickly degrades to an ADP-DnaA complex that is not apt for DNA replication. Binds acidic phospholipids. The protein is Chromosomal replication initiator protein DnaA of Staphylococcus aureus (strain Mu3 / ATCC 700698).